The sequence spans 312 residues: Methionyl-tRNA formyltransferase (312 aa).

117 to 120 (SLLP) is a (6S)-5,6,7,8-tetrahydrofolate binding site.

This sequence belongs to the Fmt family.

The catalysed reaction is L-methionyl-tRNA(fMet) + (6R)-10-formyltetrahydrofolate = N-formyl-L-methionyl-tRNA(fMet) + (6S)-5,6,7,8-tetrahydrofolate + H(+). Attaches a formyl group to the free amino group of methionyl-tRNA(fMet). The formyl group appears to play a dual role in the initiator identity of N-formylmethionyl-tRNA by promoting its recognition by IF2 and preventing the misappropriation of this tRNA by the elongation apparatus. The polypeptide is Methionyl-tRNA formyltransferase (Bordetella parapertussis (strain 12822 / ATCC BAA-587 / NCTC 13253)).